Here is a 383-residue protein sequence, read N- to C-terminus: Acetylornithine deacetylase (383 aa).

Histidine 80 serves as a coordination point for Zn(2+). The active site involves aspartate 82. Aspartate 112 is a Zn(2+) binding site. Glutamate 144 is a catalytic residue. Residues glutamate 145, glutamate 169, and histidine 355 each contribute to the Zn(2+) site.

Belongs to the peptidase M20A family. ArgE subfamily. Homodimer. It depends on Zn(2+) as a cofactor. Requires Co(2+) as cofactor. Glutathione is required as a cofactor.

It is found in the cytoplasm. It catalyses the reaction N(2)-acetyl-L-ornithine + H2O = L-ornithine + acetate. It participates in amino-acid biosynthesis; L-arginine biosynthesis; L-ornithine from N(2)-acetyl-L-ornithine (linear): step 1/1. Catalyzes the hydrolysis of the amide bond of N(2)-acetylated L-amino acids. Cleaves the acetyl group from N-acetyl-L-ornithine to form L-ornithine, an intermediate in L-arginine biosynthesis pathway, and a branchpoint in the synthesis of polyamines. In Shigella flexneri serotype 5b (strain 8401), this protein is Acetylornithine deacetylase.